We begin with the raw amino-acid sequence, 410 residues long: Arginine deiminase (410 aa).

Catalysis depends on C399, which acts as the Amidino-cysteine intermediate.

This sequence belongs to the arginine deiminase family.

Its subcellular location is the cytoplasm. The enzyme catalyses L-arginine + H2O = L-citrulline + NH4(+). Its pathway is amino-acid degradation; L-arginine degradation via ADI pathway; carbamoyl phosphate from L-arginine: step 1/2. This is Arginine deiminase from Listeria monocytogenes serotype 4a (strain HCC23).